The following is a 994-amino-acid chain: MDIELPYLAEYARTGRATCKGCKSTISKDTLRIAVMVQSAFHDAKVPNWFHKTCFFKNQRPSSVGDIQNIGNLRFADQKELTDLVENIQEVISAQLGKKRSKAFNLALKDFGIEYAKSSRSTCRGCEQKINKDLVRLRKTVYDTEVGMKYGGQPLWHHLECFAQLRSELGWFASGEDMPGFQSLADDDQAKVKNAIPPIKSEELPDTKRAKMELSDTNEEGEKKQRLKDQNDAYFRFRDDIKNKMKKKDIDILLKFNNQQPVTGDTEKLFDQTADLLTFGAIESCSECNSCQFIVNKSGYICNGNHSEWTKCNKLLKEPTRSACIVPKELKALYNFLNTVKEIPSTRIFNNFPPNKSTFSRSLLKTNKNNDVLVRPTIPRISPPLYNLKFSIIGLKNQHKELRKRIENLGGKFEVKISENTIAIISTELEIQKKSTRMKFAEELGIHIVPIEFLDFVEADTEGAIKYINSTCICSWGTDPKSRIPKETTKSLNSNSIYTKSMPVSRTFKVKDGLAVDPDSGLEDIAHVYVDSNNKYSVVLGLTDIQRNKNSYYKVQLLKADKKEKYWIFRSWGRIGTNIGNSKLEEFDTSESAKRNFKEIYADKTGNEYEQRDNFVKRTGRMYPIEIQYDDDQKLVKHESHFFTSKLEISVQNLIKLIFDIDSMNKTLMEFHIDMDKMPLGKLSAHQIQSAYRVVKEIYNVLECGSNTAKLIDATNRFYTLIPHNFGVQLPTLIETHQQIEDLRQMLDSLAEIEVAYSIIKSEDVSDACNPLDNHYAQIKTQLVALDKNSEEFSILSQYVKNTHASTHKSYDLKIVDVFKVSRQGEARRFKPFKKLHNRKLLWHGSRLTNFVGILSHGLRIAPPEAPPTGYMFGKGIYFADMVSKSANYCCTSQQNSTGLMLLSEVALGDMMECTSAKYINKLSNNKHSCFGRGRTMPDPTKSYIRSDGVEIPYGETITDEHLKSSLLYNEYIVYDVAQVNIQYLFRMEFKYSY.

2 consecutive PARP-type zinc fingers follow at residues 7–89 (YLAE…ENIQ) and 111–200 (FGIE…PPIK). 8 residues coordinate Zn(2+): Cys19, Cys22, His51, Cys54, Cys123, Cys126, His158, and Cys161. The interval 199–225 (IKSEELPDTKRAKMELSDTNEEGEKKQ) is disordered. Over residues 200-225 (KSEELPDTKRAKMELSDTNEEGEKKQ) the composition is skewed to basic and acidic residues. 2 consecutive short sequence motifs (nuclear localization signal) follow at residues 208–210 (KRA) and 223–228 (KKQRLK). Residues 214 to 354 (LSDTNEEGEK…STRIFNNFPP (141 aa)) enclose the PADR1 zinc-binding domain. The tract at residues 280–323 (GAIESCSECNSCQFIVNKSGYICNGNHSEWTKCNKLLKEPTRSA) is zinc ribbon. Cys285, Cys288, Cys302, and Cys312 together coordinate Zn(2+). Residues 368–507 (KNNDVLVRPT…YTKSMPVSRT (140 aa)) are automodification domain. In terms of domain architecture, BRCT spans 380–471 (RISPPLYNLK…EGAIKYINST (92 aa)). The 98-residue stretch at 525–622 (IAHVYVDSNN…DNFVKRTGRM (98 aa)) folds into the WGR domain. Residues 644 to 761 (TSKLEISVQN…EIEVAYSIIK (118 aa)) form the PARP alpha-helical domain. The PARP catalytic domain maps to 770–994 (NPLDNHYAQI…LFRMEFKYSY (225 aa)). Catalysis depends on Glu971, which acts as the For poly [ADP-ribose] polymerase activity.

Belongs to the ARTD/PARP family. In terms of tissue distribution, expressed in adult female oocytes, anal plates of stage 12 embryos and in cells around the central nervous system in later embryos.

Its subcellular location is the nucleus. It localises to the chromosome. The protein resides in the nucleolus. The enzyme catalyses NAD(+) + (ADP-D-ribosyl)n-acceptor = nicotinamide + (ADP-D-ribosyl)n+1-acceptor + H(+).. It catalyses the reaction L-seryl-[protein] + NAD(+) = O-(ADP-D-ribosyl)-L-seryl-[protein] + nicotinamide + H(+). It carries out the reaction L-aspartyl-[protein] + NAD(+) = 4-O-(ADP-D-ribosyl)-L-aspartyl-[protein] + nicotinamide. The catalysed reaction is L-glutamyl-[protein] + NAD(+) = 5-O-(ADP-D-ribosyl)-L-glutamyl-[protein] + nicotinamide. Its function is as follows. Poly-ADP-ribosyltransferase that mediates poly-ADP-ribosylation of proteins and plays a key role in DNA repair. Mediates glutamate, aspartate or serine ADP-ribosylation of proteins: the ADP-D-ribosyl group of NAD(+) is transferred to the acceptor carboxyl group of target residues and further ADP-ribosyl groups are transferred to the 2'-position of the terminal adenosine moiety, building up a polymer with an average chain length of 20-30 units. Mainly mediates glutamate and aspartate ADP-ribosylation of target proteins in absence of CG1218/HPF1. Following interaction with CG1218/HPF1, catalyzes serine ADP-ribosylation of target proteins; CG1218/HPF1 conferring serine specificity by completing the Parp active site. Plays a fundamental role in organizing chromatin on a global scale. Autoregulates Parp transcription by influencing the chromatin structure of its heterochromatic environment. The polypeptide is Poly [ADP-ribose] polymerase (Parp) (Drosophila melanogaster (Fruit fly)).